The following is a 253-amino-acid chain: Sulfate transporter CysZ (253 aa).

Helical transmembrane passes span 31-51 (FVILPLLVNILLMGGAFWWLF), 75-95 (LLWPLAVISVLLVFGYFFSTI), 151-171 (IVLLILYLIPGIGQTVTPVLW), and 222-242 (IPLLNLFIMPVAVCGATAMWV).

This sequence belongs to the CysZ family.

The protein localises to the cell inner membrane. Functionally, high affinity, high specificity proton-dependent sulfate transporter, which mediates sulfate uptake. Provides the sulfur source for the cysteine synthesis pathway. The sequence is that of Sulfate transporter CysZ from Escherichia coli O8 (strain IAI1).